Here is a 321-residue protein sequence, read N- to C-terminus: tRNA U34 carboxymethyltransferase (321 aa).

Residues lysine 90, tryptophan 104, lysine 109, glycine 129, 151-153, 180-181, methionine 195, tyrosine 199, and arginine 314 each bind carboxy-S-adenosyl-L-methionine; these read DPT and IE.

This sequence belongs to the class I-like SAM-binding methyltransferase superfamily. CmoB family. Homotetramer.

The enzyme catalyses carboxy-S-adenosyl-L-methionine + 5-hydroxyuridine(34) in tRNA = 5-carboxymethoxyuridine(34) in tRNA + S-adenosyl-L-homocysteine + H(+). Catalyzes carboxymethyl transfer from carboxy-S-adenosyl-L-methionine (Cx-SAM) to 5-hydroxyuridine (ho5U) to form 5-carboxymethoxyuridine (cmo5U) at position 34 in tRNAs. The polypeptide is tRNA U34 carboxymethyltransferase (Haemophilus influenzae (strain 86-028NP)).